The sequence spans 207 residues: Uracil phosphoribosyltransferase (207 aa).

5-phospho-alpha-D-ribose 1-diphosphate contacts are provided by residues Arg-77, Arg-102, and 129–137 (DPMLATGGS). Residues Ile-192 and 197-199 (GDA) each bind uracil. Asp-198 contacts 5-phospho-alpha-D-ribose 1-diphosphate.

The protein belongs to the UPRTase family. Mg(2+) is required as a cofactor.

The enzyme catalyses UMP + diphosphate = 5-phospho-alpha-D-ribose 1-diphosphate + uracil. The protein operates within pyrimidine metabolism; UMP biosynthesis via salvage pathway; UMP from uracil: step 1/1. Allosterically activated by GTP. Catalyzes the conversion of uracil and 5-phospho-alpha-D-ribose 1-diphosphate (PRPP) to UMP and diphosphate. The sequence is that of Uracil phosphoribosyltransferase from Mycoplasma mycoides subsp. mycoides SC (strain CCUG 32753 / NCTC 10114 / PG1).